A 230-amino-acid polypeptide reads, in one-letter code: Orotidine 5'-phosphate decarboxylase (230 aa).

Substrate-binding positions include Asp-10, Lys-31, 58–67 (DLKLHDIPNT), Thr-117, Arg-179, Gln-188, Gly-208, and Arg-209. Catalysis depends on Lys-60, which acts as the Proton donor.

It belongs to the OMP decarboxylase family. Type 1 subfamily. In terms of assembly, homodimer.

The catalysed reaction is orotidine 5'-phosphate + H(+) = UMP + CO2. It participates in pyrimidine metabolism; UMP biosynthesis via de novo pathway; UMP from orotate: step 2/2. Catalyzes the decarboxylation of orotidine 5'-monophosphate (OMP) to uridine 5'-monophosphate (UMP). The chain is Orotidine 5'-phosphate decarboxylase from Staphylococcus haemolyticus (strain JCSC1435).